The primary structure comprises 659 residues: RNA-binding E3 ubiquitin-protein ligase MEX3C (659 aa).

A compositionally biased stretch (low complexity) spans M1 to P15. Positions M1–S140 are disordered. The span at A16–G37 shows a compositional bias: pro residues. Residues E64–R82 are compositionally biased toward low complexity. The segment covering R83–P94 has biased composition (basic and acidic residues). Phosphoserine is present on S88. Residues A104–D137 show a composition bias toward acidic residues. 2 consecutive KH domains span residues T232–I293 and Q326–I387. Positions F513 to N569 are disordered. The span at P526–L544 shows a compositional bias: polar residues. S537 and S545 each carry phosphoserine. The segment covering S551–S562 has biased composition (basic and acidic residues). The RING-type zinc-finger motif lies at C608–Q648.

Interacts with USP7, which antagonizes the ability to degrade mRNA. Highest levels found in fetal brain and testis. Also expressed in thymus, salivary gland and uterus. Highly expressed in cells of the innate immune system, in particular activated NK cells. Week expression in the intestine.

It localises to the cytoplasm. It is found in the nucleus. It catalyses the reaction S-ubiquitinyl-[E2 ubiquitin-conjugating enzyme]-L-cysteine + [acceptor protein]-L-lysine = [E2 ubiquitin-conjugating enzyme]-L-cysteine + N(6)-ubiquitinyl-[acceptor protein]-L-lysine.. In terms of biological role, E3 ubiquitin ligase responsible for the post-transcriptional regulation of common HLA-A allotypes. Binds to the 3' UTR of HLA-A2 mRNA, and regulates its levels by promoting mRNA decay. RNA binding is sufficient to prevent translation, but ubiquitin ligase activity is required for mRNA degradation. The polypeptide is RNA-binding E3 ubiquitin-protein ligase MEX3C (MEX3C) (Homo sapiens (Human)).